Here is a 291-residue protein sequence, read N- to C-terminus: MAENQEALAEFYDKGVGVWDNLSREHMHFGYYAPGATATIGGHRASLVRLIDEALCFAEFPDDPEKKPRNMLDVGCGIGGTCLHVAKKYDIQCKGINISPEQVKIAQGLAAAQGLESKVSFDVGDALDMPYPDGAFDLVLSIHCIEHLQDKEKFIREMVRVAASGATIIILSHVHRDLSPSEQSLKPQEERVLRKIGSSVQAWFCPLSNYVSLLAPLPVEVIKIADWSRNIDPSSRLMLKVAFSVKGIVSNLMKGVQGWTAIKNVLPMKLLHKALHDGLVKFVVLTCRKSN.

The tract at residues 71–80 (MLDVGCGIGG) is SAM motif I. The short motif at 133-139 (DGAFDLV) is the Vacuolar targeting signal element. An SAM motif II region spans residues 134-142 (GAFDLVLSI). Positions 161–170 (VAASGATIII) are SAM motif III.

This sequence belongs to the class I-like SAM-binding methyltransferase superfamily. gTMT family. Homodimer. Mainly expressed in roots, but barely detectable in stems and flowers.

The protein localises to the vacuole membrane. It carries out the reaction ajmaline + S-adenosyl-L-methionine = 4-methylajmaline + S-adenosyl-L-homocysteine + H(+). The catalysed reaction is norajmaline + S-adenosyl-L-methionine = 4-methylnorajmaline + S-adenosyl-L-homocysteine + H(+). Its pathway is alkaloid biosynthesis; ajmaline biosynthesis. Functionally, N-methyltransferase involved in the biosynthesis of ajmaline-type monoterpenoid indole alkaloids (MIAs) natural products, important plant-derived pharmaceuticals used in the therapy of heart disorders. Catalyzes the indole N-methylation of ajmaline to produce 4-methylajmaline. Also able, with a lower efficiency, to mediates the conversion of norajmaline to 4-methylnorajmaline. The chain is Ajmaline N-methyltransferase from Rauvolfia serpentina (Serpentine wood).